Reading from the N-terminus, the 335-residue chain is Peroxidase 2 (335 aa).

The N-terminal stretch at 1–29 (MAAATAPKTMPSSVFAAALLLLAAAACQA) is a signal peptide. 4 cysteine pairs are disulfide-bonded: C44/C125, C77/C82, C131/C329, and C212/C238. The active-site Proton acceptor is the H75. Residues D76, V79, G81, D83, and S85 each coordinate Ca(2+). Residues N166 and N180 are each glycosylated (N-linked (GlcNAc...) asparagine). Position 205 (H205) interacts with heme b. T206 provides a ligand contact to Ca(2+). A glycan (N-linked (GlcNAc...) asparagine) is linked at N241. Residues D253, T256, and D261 each contribute to the Ca(2+) site.

It belongs to the peroxidase family. Classical plant (class III) peroxidase subfamily. It depends on heme b as a cofactor. The cofactor is Ca(2+). In terms of tissue distribution, expressed in the elongating region of young roots, and in root vascular tissues and epidermis.

It localises to the secreted. It catalyses the reaction 2 a phenolic donor + H2O2 = 2 a phenolic radical donor + 2 H2O. In terms of biological role, removal of H(2)O(2), oxidation of toxic reductants, biosynthesis and degradation of lignin, suberization, auxin catabolism, response to environmental stresses such as wounding, pathogen attack and oxidative stress. These functions might be dependent on each isozyme/isoform in each plant tissue. The polypeptide is Peroxidase 2 (PER2) (Zea mays (Maize)).